Reading from the N-terminus, the 358-residue chain is MAKVAILGAGNLALTLAGDLARRLGQTPSIWAPISNRSSFNDVRCLGSLELVGPDYGGDFQPRLEDDLGTAISGAAFIFLTVPTLGQQGILRELAKFNLSNSVLVALPGSATSLACKQTLVPTFAPIAVIESTTSPYACRRVKARVLMLGVKATFEVATTQPLSEEVKGRFEVLFPNPPQWYQHPASIFFSNTNPVAHPAGILAARDSIEQGILPVPKFYRQFVPQAITRVIAIDEERLSIVDALGLESETDFSYSKKWYGGHACNAREFYETYEGYAEIETPKTMNHRYLTEDVKHILVLWVEIAEAIGVQVPEMKSVVQEASDVLNENLLRTGRGLSSLNLGGANANAIVRALNGV.

It belongs to the lysopine/nopaline/octopine/opine/vitopine dehydrogenases family.

It catalyses the reaction D-octopine + NAD(+) + H2O = L-arginine + pyruvate + NADH + H(+). It carries out the reaction D-lysopine + NADP(+) + H2O = L-lysine + pyruvate + NADPH + H(+). Its function is as follows. Reductive condensation of pyruvate and arginine, lysine, histidine, or octopine to form octopine, lysopine, histopine, or octopinic acid, respectively. NADPH is the preferred cofactor, but NADH can also be used. The sequence is that of Protein ocs (ocs) from Agrobacterium vitis (Rhizobium vitis).